The chain runs to 81 residues: ATP synthase subunit c (81 aa).

2 helical membrane-spanning segments follow: residues 7-27 (AASV…PGIG) and 57-77 (LAFM…LLFA).

It belongs to the ATPase C chain family. In terms of assembly, F-type ATPases have 2 components, F(1) - the catalytic core - and F(0) - the membrane proton channel. F(1) has five subunits: alpha(3), beta(3), gamma(1), delta(1), epsilon(1). F(0) has four main subunits: a(1), b(1), b'(1) and c(10-14). The alpha and beta chains form an alternating ring which encloses part of the gamma chain. F(1) is attached to F(0) by a central stalk formed by the gamma and epsilon chains, while a peripheral stalk is formed by the delta, b and b' chains.

The protein resides in the cellular thylakoid membrane. Its function is as follows. F(1)F(0) ATP synthase produces ATP from ADP in the presence of a proton or sodium gradient. F-type ATPases consist of two structural domains, F(1) containing the extramembraneous catalytic core and F(0) containing the membrane proton channel, linked together by a central stalk and a peripheral stalk. During catalysis, ATP synthesis in the catalytic domain of F(1) is coupled via a rotary mechanism of the central stalk subunits to proton translocation. Functionally, key component of the F(0) channel; it plays a direct role in translocation across the membrane. A homomeric c-ring of between 10-14 subunits forms the central stalk rotor element with the F(1) delta and epsilon subunits. The chain is ATP synthase subunit c from Nostoc sp. (strain PCC 7120 / SAG 25.82 / UTEX 2576).